The sequence spans 115 residues: Large ribosomal subunit protein bL19 (115 aa).

Belongs to the bacterial ribosomal protein bL19 family.

This protein is located at the 30S-50S ribosomal subunit interface and may play a role in the structure and function of the aminoacyl-tRNA binding site. The polypeptide is Large ribosomal subunit protein bL19 (rplS) (Buchnera aphidicola subsp. Acyrthosiphon pisum (strain APS) (Acyrthosiphon pisum symbiotic bacterium)).